The primary structure comprises 416 residues: Cysteate synthase (416 aa).

Lysine 104 carries the post-translational modification N6-(pyridoxal phosphate)lysine. Residue asparagine 130 participates in pyridoxal 5'-phosphate binding.

The protein belongs to the threonine synthase family. Cysteate synthase subfamily. In terms of assembly, homotrimer. Requires pyridoxal 5'-phosphate as cofactor.

The catalysed reaction is O-phospho-L-serine + sulfite + H(+) = L-cysteate + phosphate. The protein operates within cofactor biosynthesis; coenzyme M biosynthesis. Its activity is regulated as follows. Is inhibited by AP3 (DL-2-amino-3-phosphonopropionate) and, to a lesser extent, by L-aspartate or AP4 (DL-2-amino-4-phosphonobutyrate). Is also inhibited by EDTA in vitro. Functionally, specifically catalyzes the beta-elimination of phosphate from L-phosphoserine and the beta-addition of sulfite to the dehydroalanine intermediate to produce L-cysteate. Does not display threonine synthase activity like the paralog protein ThrC. The chain is Cysteate synthase from Methanosarcina acetivorans (strain ATCC 35395 / DSM 2834 / JCM 12185 / C2A).